A 767-amino-acid chain; its full sequence is Photosystem I P700 chlorophyll a apoprotein A1 (767 aa).

The interval 1 to 22 (MTISPPESGEKNKKVLEDPVKA) is disordered. Positions 8-22 (SGEKNKKVLEDPVKA) are enriched in basic and acidic residues. 8 helical membrane-spanning segments follow: residues 76–99 (IFSA…FHGA), 162–185 (LMAL…YHYH), 201–225 (LNHH…HIGA), 309–327 (IAHH…GHLY), 368–391 (RHAQ…HHMY), 407–433 (LGLF…IAMV), 455–477 (ALIS…LYIH), and 558–576 (LMIH…LILL). 2 residues coordinate [4Fe-4S] cluster: Cys-600 and Cys-609. Helical transmembrane passes span 616–637 (HVFL…HFSW) and 681–703 (ISMY…MFLF). Residue His-692 coordinates divinylchlorophyll a'. 2 residues coordinate divinyl chlorophyll a: Met-700 and Tyr-708. Residue Trp-709 coordinates phylloquinone. The chain crosses the membrane as a helical span at residues 741–761 (AVGVAHFLLGGIATTWAFFHA).

This sequence belongs to the PsaA/PsaB family. In terms of assembly, the PsaA/B heterodimer binds the P700 divinyl chlorophyll special pair and subsequent electron acceptors. PSI consists of a core antenna complex that captures photons, and an electron transfer chain that converts photonic excitation into a charge separation. The cyanobacterial PSI reaction center is composed of one copy each of PsaA,B,C,D,E,F,I,J,K,L,M and X, and forms trimeric complexes. The cofactor is PSI electron transfer chain: 5 divinyl chlorophyll a, 1 divinyl chlorophyll a', 2 phylloquinones and 3 4Fe-4S clusters. PSI core antenna: 90 divinyl chlorophyll a, 22 carotenoids, 3 phospholipids and 1 galactolipid. P700 is a divinyl chlorophyll a/divinyl chlorophyll a' dimer, A0 is one or more divinyl chlorophyll a, A1 is one or both phylloquinones and FX is a shared 4Fe-4S iron-sulfur center..

It localises to the cellular thylakoid membrane. It carries out the reaction reduced [plastocyanin] + hnu + oxidized [2Fe-2S]-[ferredoxin] = oxidized [plastocyanin] + reduced [2Fe-2S]-[ferredoxin]. PsaA and PsaB bind P700, the primary electron donor of photosystem I (PSI), as well as the electron acceptors A0, A1 and FX. PSI is a plastocyanin/cytochrome c6-ferredoxin oxidoreductase, converting photonic excitation into a charge separation, which transfers an electron from the donor P700 chlorophyll pair to the spectroscopically characterized acceptors A0, A1, FX, FA and FB in turn. Oxidized P700 is reduced on the lumenal side of the thylakoid membrane by plastocyanin or cytochrome c6. The sequence is that of Photosystem I P700 chlorophyll a apoprotein A1 from Prochlorococcus marinus (strain MIT 9312).